We begin with the raw amino-acid sequence, 152 residues long: Deoxyuridine 5'-triphosphate nucleotidohydrolase (152 aa).

Substrate is bound by residues 71–73 (RSG), N84, 88–90 (LID), and M98.

This sequence belongs to the dUTPase family. Mg(2+) is required as a cofactor.

The enzyme catalyses dUTP + H2O = dUMP + diphosphate + H(+). It functions in the pathway pyrimidine metabolism; dUMP biosynthesis; dUMP from dCTP (dUTP route): step 2/2. This enzyme is involved in nucleotide metabolism: it produces dUMP, the immediate precursor of thymidine nucleotides and it decreases the intracellular concentration of dUTP so that uracil cannot be incorporated into DNA. This chain is Deoxyuridine 5'-triphosphate nucleotidohydrolase, found in Shewanella denitrificans (strain OS217 / ATCC BAA-1090 / DSM 15013).